We begin with the raw amino-acid sequence, 513 residues long: ATP synthase subunit alpha (513 aa).

169–176 (GDRQTGKT) is a binding site for ATP.

It belongs to the ATPase alpha/beta chains family. As to quaternary structure, F-type ATPases have 2 components, CF(1) - the catalytic core - and CF(0) - the membrane proton channel. CF(1) has five subunits: alpha(3), beta(3), gamma(1), delta(1), epsilon(1). CF(0) has three main subunits: a(1), b(2) and c(9-12). The alpha and beta chains form an alternating ring which encloses part of the gamma chain. CF(1) is attached to CF(0) by a central stalk formed by the gamma and epsilon chains, while a peripheral stalk is formed by the delta and b chains.

Its subcellular location is the cell inner membrane. The enzyme catalyses ATP + H2O + 4 H(+)(in) = ADP + phosphate + 5 H(+)(out). Its function is as follows. Produces ATP from ADP in the presence of a proton gradient across the membrane. The alpha chain is a regulatory subunit. The sequence is that of ATP synthase subunit alpha from Vibrio vulnificus (strain CMCP6).